The following is a 117-amino-acid chain: NADH-ubiquinone oxidoreductase chain 3 (117 aa).

A run of 3 helical transmembrane segments spans residues 2 to 22 (ILYVLPTSLSLCLLLMIIYLL), 56 to 76 (FFILTVLFLIFDVEVVLLFPV), and 85 to 105 (SPLIIMSIILFMMVLLIGLLY).

It belongs to the complex I subunit 3 family.

It is found in the mitochondrion membrane. The enzyme catalyses a ubiquinone + NADH + 5 H(+)(in) = a ubiquinol + NAD(+) + 4 H(+)(out). Its function is as follows. Core subunit of the mitochondrial membrane respiratory chain NADH dehydrogenase (Complex I) that is believed to belong to the minimal assembly required for catalysis. Complex I functions in the transfer of electrons from NADH to the respiratory chain. The immediate electron acceptor for the enzyme is believed to be ubiquinone. The protein is NADH-ubiquinone oxidoreductase chain 3 (ND3) of Albinaria caerulea (Land snail).